The following is a 338-amino-acid chain: MDDRMVDQSQHEDESSFELSLRPHFLKQYIGQASIKSNLEVFIKAAKLREEPLDHVLLFGPPGLGKTTLSNIIANEMNVNIRTVTGPAIERPGDLAAILSGLQPGDVLFIDEIHRLSSVVEEVLYPAMEDFYLDIVIGKGEEARSIRIDLPPFTLVGATTRAGSLTGPLRDRFGVHLRLEYYKESELKDIIIRTAEVLNTEIDEESAVELAKRSRGTPRIANRLLKRVRDFQQVNEDDMIYIETTKRALQLLQVDDYGLDYIDHKMMSCIINQYNGGPVGLDTIAVSIGEERITIEDVYEPFLIQKGFLERTPRGRKATPLAYEHFEAKNGKRDNFEY.

Residues 1–182 (MDDRMVDQSQ…FGVHLRLEYY (182 aa)) form a large ATPase domain (RuvB-L) region. ATP-binding positions include leucine 21, arginine 22, glycine 63, lysine 66, threonine 67, threonine 68, 129–131 (EDF), arginine 172, tyrosine 182, and arginine 219. Mg(2+) is bound at residue threonine 67. The interval 183–253 (KESELKDIII…TTKRALQLLQ (71 aa)) is small ATPAse domain (RuvB-S). Positions 256 to 338 (DYGLDYIDHK…KNGKRDNFEY (83 aa)) are head domain (RuvB-H). DNA-binding residues include arginine 292, arginine 311, and arginine 316.

The protein belongs to the RuvB family. As to quaternary structure, homohexamer. Forms an RuvA(8)-RuvB(12)-Holliday junction (HJ) complex. HJ DNA is sandwiched between 2 RuvA tetramers; dsDNA enters through RuvA and exits via RuvB. An RuvB hexamer assembles on each DNA strand where it exits the tetramer. Each RuvB hexamer is contacted by two RuvA subunits (via domain III) on 2 adjacent RuvB subunits; this complex drives branch migration. In the full resolvosome a probable DNA-RuvA(4)-RuvB(12)-RuvC(2) complex forms which resolves the HJ.

It is found in the cytoplasm. The catalysed reaction is ATP + H2O = ADP + phosphate + H(+). The RuvA-RuvB-RuvC complex processes Holliday junction (HJ) DNA during genetic recombination and DNA repair, while the RuvA-RuvB complex plays an important role in the rescue of blocked DNA replication forks via replication fork reversal (RFR). RuvA specifically binds to HJ cruciform DNA, conferring on it an open structure. The RuvB hexamer acts as an ATP-dependent pump, pulling dsDNA into and through the RuvAB complex. RuvB forms 2 homohexamers on either side of HJ DNA bound by 1 or 2 RuvA tetramers; 4 subunits per hexamer contact DNA at a time. Coordinated motions by a converter formed by DNA-disengaged RuvB subunits stimulates ATP hydrolysis and nucleotide exchange. Immobilization of the converter enables RuvB to convert the ATP-contained energy into a lever motion, pulling 2 nucleotides of DNA out of the RuvA tetramer per ATP hydrolyzed, thus driving DNA branch migration. The RuvB motors rotate together with the DNA substrate, which together with the progressing nucleotide cycle form the mechanistic basis for DNA recombination by continuous HJ branch migration. Branch migration allows RuvC to scan DNA until it finds its consensus sequence, where it cleaves and resolves cruciform DNA. The sequence is that of Holliday junction branch migration complex subunit RuvB from Staphylococcus carnosus (strain TM300).